The primary structure comprises 103 residues: Large ribosomal subunit protein uL24 (103 aa).

Belongs to the universal ribosomal protein uL24 family. Part of the 50S ribosomal subunit.

Functionally, one of two assembly initiator proteins, it binds directly to the 5'-end of the 23S rRNA, where it nucleates assembly of the 50S subunit. In terms of biological role, one of the proteins that surrounds the polypeptide exit tunnel on the outside of the subunit. In Haemophilus influenzae (strain PittEE), this protein is Large ribosomal subunit protein uL24.